We begin with the raw amino-acid sequence, 185 residues long: MSSDGTPGRKRSAKVRSSVSGLEIEVLREAGDWESSTDETVRRAAEHAYAVARGDESAELCIVLGDDALVAKLNKAYRGKEGPTNVLSFPAAEMPDTGAPEAVFGGATPLLGDVVLARETIAREALDQNKKFADHLSHLTVHGVLHLLGHDHMEDVDADEMEALERDILEDLGIADPYGADHPGQ.

Zn(2+)-binding residues include H142, H146, and H152.

Belongs to the endoribonuclease YbeY family. Zn(2+) is required as a cofactor.

It localises to the cytoplasm. Functionally, single strand-specific metallo-endoribonuclease involved in late-stage 70S ribosome quality control and in maturation of the 3' terminus of the 16S rRNA. The polypeptide is Endoribonuclease YbeY (Parvibaculum lavamentivorans (strain DS-1 / DSM 13023 / NCIMB 13966)).